A 418-amino-acid polypeptide reads, in one-letter code: Serine hydroxymethyltransferase (418 aa).

(6S)-5,6,7,8-tetrahydrofolate-binding positions include Leu-120 and 124 to 126 (GHL). Position 229 is an N6-(pyridoxal phosphate)lysine (Lys-229). 353–355 (SPF) lines the (6S)-5,6,7,8-tetrahydrofolate pocket.

Belongs to the SHMT family. In terms of assembly, homodimer. Requires pyridoxal 5'-phosphate as cofactor.

It is found in the cytoplasm. The enzyme catalyses (6R)-5,10-methylene-5,6,7,8-tetrahydrofolate + glycine + H2O = (6S)-5,6,7,8-tetrahydrofolate + L-serine. Its pathway is one-carbon metabolism; tetrahydrofolate interconversion. The protein operates within amino-acid biosynthesis; glycine biosynthesis; glycine from L-serine: step 1/1. Functionally, catalyzes the reversible interconversion of serine and glycine with tetrahydrofolate (THF) serving as the one-carbon carrier. This reaction serves as the major source of one-carbon groups required for the biosynthesis of purines, thymidylate, methionine, and other important biomolecules. Also exhibits THF-independent aldolase activity toward beta-hydroxyamino acids, producing glycine and aldehydes, via a retro-aldol mechanism. The chain is Serine hydroxymethyltransferase from Psychrobacter sp. (strain PRwf-1).